Consider the following 315-residue polypeptide: Acetyl-coenzyme A carboxylase carboxyl transferase subunit alpha (315 aa).

The 254-residue stretch at 40–293 folds into the CoA carboxyltransferase C-terminal domain; that stretch reads LQDKSKTLTE…REELSSQLAM (254 aa).

This sequence belongs to the AccA family. Acetyl-CoA carboxylase is a heterohexamer composed of biotin carboxyl carrier protein (AccB), biotin carboxylase (AccC) and two subunits each of ACCase subunit alpha (AccA) and ACCase subunit beta (AccD).

The protein resides in the cytoplasm. It catalyses the reaction N(6)-carboxybiotinyl-L-lysyl-[protein] + acetyl-CoA = N(6)-biotinyl-L-lysyl-[protein] + malonyl-CoA. It functions in the pathway lipid metabolism; malonyl-CoA biosynthesis; malonyl-CoA from acetyl-CoA: step 1/1. Functionally, component of the acetyl coenzyme A carboxylase (ACC) complex. First, biotin carboxylase catalyzes the carboxylation of biotin on its carrier protein (BCCP) and then the CO(2) group is transferred by the carboxyltransferase to acetyl-CoA to form malonyl-CoA. The protein is Acetyl-coenzyme A carboxylase carboxyl transferase subunit alpha of Pseudomonas syringae pv. syringae (strain B728a).